A 376-amino-acid chain; its full sequence is MLSSAHVVPTSVRRAPSWICSSSRSFMDLKALLSSLNDFASLSFAESWDNVGLLVEPSPPHTVNTLFLTNDLTEEVMEEALQKKADLILSYHPPIFRPMKHITWKTWKERLVIRALENRVAIYSPHTAYDAAPQGVNSWLAKGLGTCTTRPIHPSKAPNYPTEGTHRLEFSANHSQDLDKVMSAVKGVGGVSVTSFPARCDGEEQTRVSLNCTQKALMQVLAFLSQDRQLYQKTEILSLEKPLLLHTGMGRLCTLDESVSLATMIERIKRHLKLPHLRLALGVGRTLESPVKVVALCAGSGGSVLQGVEADLYLTGEMSHHDVLDAASKGINVILCEHSNTERGFLSDLQEMLGVHLENKINIILSETDRDPLRVV.

Lysine 108 bears the N6-acetyllysine mark. The segment at 243-376 (LLLHTGMGRL…ETDRDPLRVV (134 aa)) is mediates interaction with COPS2. The residue at position 254 (threonine 254) is a Phosphothreonine. Serine 258 is subject to Phosphoserine.

It belongs to the GTP cyclohydrolase I type 2/NIF3 family. Homodimer. Interacts with COPS2. Interacts with THOC7.

Its subcellular location is the cytoplasm. The protein resides in the nucleus. In terms of biological role, may function as a transcriptional corepressor through its interaction with COPS2, negatively regulating the expression of genes involved in neuronal differentiation. The polypeptide is NIF3-like protein 1 (Rattus norvegicus (Rat)).